Reading from the N-terminus, the 123-residue chain is Small ribosomal subunit protein uS13 (123 aa).

The tract at residues 96 to 123 (LPVRGQRTKTNARTRKGPKKTVGARRKK) is disordered.

The protein belongs to the universal ribosomal protein uS13 family. As to quaternary structure, part of the 30S ribosomal subunit. Forms a loose heterodimer with protein S19. Forms two bridges to the 50S subunit in the 70S ribosome.

Functionally, located at the top of the head of the 30S subunit, it contacts several helices of the 16S rRNA. In the 70S ribosome it contacts the 23S rRNA (bridge B1a) and protein L5 of the 50S subunit (bridge B1b), connecting the 2 subunits; these bridges are implicated in subunit movement. Contacts the tRNAs in the A and P-sites. The chain is Small ribosomal subunit protein uS13 from Desulforamulus reducens (strain ATCC BAA-1160 / DSM 100696 / MI-1) (Desulfotomaculum reducens).